Here is a 116-residue protein sequence, read N- to C-terminus: Large ribosomal subunit protein uL23 (116 aa).

The protein belongs to the universal ribosomal protein uL23 family. Part of the 50S ribosomal subunit. Contacts protein L29, and trigger factor when it is bound to the ribosome.

In terms of biological role, one of the early assembly proteins it binds 23S rRNA. One of the proteins that surrounds the polypeptide exit tunnel on the outside of the ribosome. Forms the main docking site for trigger factor binding to the ribosome. This is Large ribosomal subunit protein uL23 from Psychrobacter sp. (strain PRwf-1).